The primary structure comprises 349 residues: MDLFDKLKELHEEGLKQISKATDEKTLNEVRVELVGRKGELTKILHSMRDVAPENRREVGQKVNELRDLFNAQLDEAKENIVKAVLAKRLEEEKIDVTLPGREGHLGSKHPINIILDDLESYFIGMGYKVVQGPEIETDHYVFEMMNLPKDHPARDMQATFYINDENLLRSQTSGDQARVLEKHDFSKGPLKMVGPGKVYRRDDDDATHSHQFMQMEGLVIDKHVTMSDLKGTLEMIAKHVFGQDRATRLRPSYFPFTEPSVEMDVSCFNCDGKGCPICKYTGWIEVLGAGMVHPNVLENAGVDSNVYGGFAFGVGLDRFAILKYGIDDIRDFYTNDVRFLEQFRKEEK.

E259 contributes to the Mg(2+) binding site.

This sequence belongs to the class-II aminoacyl-tRNA synthetase family. Phe-tRNA synthetase alpha subunit type 1 subfamily. Tetramer of two alpha and two beta subunits. Requires Mg(2+) as cofactor.

It is found in the cytoplasm. It catalyses the reaction tRNA(Phe) + L-phenylalanine + ATP = L-phenylalanyl-tRNA(Phe) + AMP + diphosphate + H(+). The protein is Phenylalanine--tRNA ligase alpha subunit of Lactobacillus acidophilus (strain ATCC 700396 / NCK56 / N2 / NCFM).